The following is a 346-amino-acid chain: Probable dual-specificity RNA methyltransferase RlmN (346 aa).

The Proton acceptor role is filled by Glu91. The 229-residue stretch at Thr97–Glu325 folds into the Radical SAM core domain. Cys104 and Cys330 form a disulfide bridge. [4Fe-4S] cluster contacts are provided by Cys111, Cys115, and Cys118. Residues Gly158–Glu159, Ser188, Ser211–His213, and Asn287 contribute to the S-adenosyl-L-methionine site. Cys330 acts as the S-methylcysteine intermediate in catalysis.

Belongs to the radical SAM superfamily. RlmN family. It depends on [4Fe-4S] cluster as a cofactor.

It is found in the cytoplasm. The catalysed reaction is adenosine(2503) in 23S rRNA + 2 reduced [2Fe-2S]-[ferredoxin] + 2 S-adenosyl-L-methionine = 2-methyladenosine(2503) in 23S rRNA + 5'-deoxyadenosine + L-methionine + 2 oxidized [2Fe-2S]-[ferredoxin] + S-adenosyl-L-homocysteine. It catalyses the reaction adenosine(37) in tRNA + 2 reduced [2Fe-2S]-[ferredoxin] + 2 S-adenosyl-L-methionine = 2-methyladenosine(37) in tRNA + 5'-deoxyadenosine + L-methionine + 2 oxidized [2Fe-2S]-[ferredoxin] + S-adenosyl-L-homocysteine. Its function is as follows. Specifically methylates position 2 of adenine 2503 in 23S rRNA and position 2 of adenine 37 in tRNAs. The protein is Probable dual-specificity RNA methyltransferase RlmN of Picosynechococcus sp. (strain ATCC 27264 / PCC 7002 / PR-6) (Agmenellum quadruplicatum).